The following is a 183-amino-acid chain: ESX-1 secretion-associated protein EspH (183 aa).

A compositionally biased stretch (acidic residues) spans 1 to 16 (MVDPPGNDDDHGDLDA). The segment at 1–32 (MVDPPGNDDDHGDLDALDFSAAHTNEASPLDA) is disordered.

This Mycobacterium tuberculosis (strain ATCC 25618 / H37Rv) protein is ESX-1 secretion-associated protein EspH.